The primary structure comprises 1023 residues: Rho GTPase-activating protein 11A (1023 aa).

Residues 49–239 (VPFNALPHSA…TLIDYASDIG (191 aa)) enclose the Rho-GAP domain. The residue at position 285 (serine 285) is a Phosphoserine. Position 306 is a phosphothreonine (threonine 306). Serine 316 and serine 318 each carry phosphoserine. Threonine 323 carries the post-translational modification Phosphothreonine. Serine 339, serine 340, and serine 484 each carry phosphoserine. Phosphothreonine is present on threonine 508. The interval 567 to 589 (TPSNLNNKHNSNITSSPLSGDEN) is disordered. 4 positions are modified to phosphoserine: serine 582, serine 585, serine 638, and serine 675. The interval 714-734 (KQEFSSDEEIKKQQSPKDKLN) is disordered. Basic and acidic residues predominate over residues 721-734 (EEIKKQQSPKDKLN). Phosphoserine is present on serine 847. A Phosphothreonine modification is found at threonine 866. Serine 868 bears the Phosphoserine mark. Residues 999–1023 (AWYKGSPKHPIGKTQLLPTSKPVDL) are disordered.

The protein localises to the nucleus. Its function is as follows. GTPase activator for the Rho-type GTPases by converting them to an inactive GDP-bound state. The protein is Rho GTPase-activating protein 11A of Homo sapiens (Human).